A 376-amino-acid chain; its full sequence is Chaperone protein DnaJ (376 aa).

One can recognise a J domain in the interval 5 to 70 (DYYEILGVSK…QKRAAYDQYG (66 aa)). The CR-type zinc-finger motif lies at 131–209 (GVTKEIRIPT…CHGHGRVERS (79 aa)). Positions 144, 147, 161, 164, 183, 186, 197, and 200 each coordinate Zn(2+). 4 CXXCXGXG motif repeats span residues 144–151 (CDVCHGSG), 161–168 (CPTCHGSG), 183–190 (CPHCQGRG), and 197–204 (CNKCHGHG).

It belongs to the DnaJ family. As to quaternary structure, homodimer. Zn(2+) serves as cofactor.

The protein resides in the cytoplasm. In terms of biological role, participates actively in the response to hyperosmotic and heat shock by preventing the aggregation of stress-denatured proteins and by disaggregating proteins, also in an autonomous, DnaK-independent fashion. Unfolded proteins bind initially to DnaJ; upon interaction with the DnaJ-bound protein, DnaK hydrolyzes its bound ATP, resulting in the formation of a stable complex. GrpE releases ADP from DnaK; ATP binding to DnaK triggers the release of the substrate protein, thus completing the reaction cycle. Several rounds of ATP-dependent interactions between DnaJ, DnaK and GrpE are required for fully efficient folding. Also involved, together with DnaK and GrpE, in the DNA replication of plasmids through activation of initiation proteins. The sequence is that of Chaperone protein DnaJ from Shigella flexneri.